Reading from the N-terminus, the 195-residue chain is Molybdenum cofactor guanylyltransferase (195 aa).

GTP is bound by residues 10-12 (LAG), Lys-23, Asn-51, Asp-69, and Asp-99. Asp-99 contributes to the Mg(2+) binding site.

The protein belongs to the MobA family. Monomer. Requires Mg(2+) as cofactor.

Its subcellular location is the cytoplasm. It catalyses the reaction Mo-molybdopterin + GTP + H(+) = Mo-molybdopterin guanine dinucleotide + diphosphate. In terms of biological role, transfers a GMP moiety from GTP to Mo-molybdopterin (Mo-MPT) cofactor (Moco or molybdenum cofactor) to form Mo-molybdopterin guanine dinucleotide (Mo-MGD) cofactor. This is Molybdenum cofactor guanylyltransferase from Yersinia pestis bv. Antiqua (strain Antiqua).